The following is an 89-amino-acid chain: Small ribosomal subunit protein uS14 (89 aa).

This sequence belongs to the universal ribosomal protein uS14 family. Part of the 30S ribosomal subunit. Contacts proteins S3 and S10.

In terms of biological role, binds 16S rRNA, required for the assembly of 30S particles and may also be responsible for determining the conformation of the 16S rRNA at the A site. The protein is Small ribosomal subunit protein uS14 of Amoebophilus asiaticus (strain 5a2).